Here is a 402-residue protein sequence, read N- to C-terminus: Plasminogen activator inhibitor 1 (402 aa).

A signal peptide spans 1–23 (MRMSPVFACLALGLALIFGEGSA). Residues asparagine 232, asparagine 288, and asparagine 352 are each glycosylated (N-linked (GlcNAc...) asparagine).

This sequence belongs to the serpin family. Forms a heterodimer with TMPRSS7. Interacts with VTN. Binds LRP1B; binding is followed by internalization and degradation. Interacts with PPP1CB. In complex with PLAU/uPA, interacts with PLAUR/uPAR. Interacts with SORL1 and LRP1, either alone or in complex with PLAU; these interactions are abolished in the presence of LRPAP1/RAP. The ternary complex composed of PLAUR-PLAU-PAI1 also interacts with SORL1. Interacts with PLAT/tPA. Also interacts with SORL1, when complexed to PLAT/tPA. Vascular endothelial cells may be the primary site of synthesis of plasma PAI1.

The protein localises to the secreted. Functionally, serine protease inhibitor. Inhibits TMPRSS7. Is a primary inhibitor of tissue-type plasminogen activator (PLAT) and urokinase-type plasminogen activator (PLAU). As PLAT inhibitor, it is required for fibrinolysis down-regulation and is responsible for the controlled degradation of blood clots. As PLAU inhibitor, it is involved in the regulation of cell adhesion and spreading. Acts as a regulator of cell migration, independently of its role as protease inhibitor. It is required for stimulation of keratinocyte migration during cutaneous injury repair. It is involved in cellular and replicative senescence. Plays a role in alveolar type 2 cells senescence in the lung. Is involved in the regulation of cementogenic differentiation of periodontal ligament stem cells, and regulates odontoblast differentiation and dentin formation during odontogenesis. This chain is Plasminogen activator inhibitor 1 (SERPINE1), found in Bos taurus (Bovine).